Consider the following 328-residue polypeptide: Carbonic anhydrase, chloroplastic (328 aa).

A compositionally biased stretch (low complexity) spans 1–15; the sequence is MSTSSINGFSLSSLS. The interval 1–26 is disordered; it reads MSTSSINGFSLSSLSPAKTSTKRTTL. The N-terminal 70 residues, 1–70, are a transit peptide targeting the chloroplast; the sequence is MSTSSINGFS…IITPVLREEM (70 aa).

Belongs to the beta-class carbonic anhydrase family. As to quaternary structure, homohexamer.

It localises to the plastid. It is found in the chloroplast stroma. The enzyme catalyses hydrogencarbonate + H(+) = CO2 + H2O. In terms of biological role, reversible hydration of carbon dioxide. This is Carbonic anhydrase, chloroplastic from Pisum sativum (Garden pea).